A 437-amino-acid chain; its full sequence is Protein disulfide-isomerase tmx3a (437 aa).

The first 21 residues, methionine 1–glycine 21, serve as a signal peptide directing secretion. The region spanning tyrosine 22–glycine 126 is the Thioredoxin domain. Residues tyrosine 22–threonine 368 lie on the Extracellular side of the membrane. Active-site nucleophile residues include cysteine 48 and cysteine 51. An intrachain disulfide couples cysteine 48 to cysteine 51. N-linked (GlcNAc...) asparagine glycosylation occurs at asparagine 308. A helical membrane pass occupies residues alanine 369–tyrosine 389. Residues alanine 390–aspartate 437 lie on the Cytoplasmic side of the membrane. Residues aspartate 398–aspartate 437 are disordered. The segment covering threonine 414 to aspartate 437 has biased composition (basic and acidic residues). The short motif at lysine 434–aspartate 437 is the Di-lysine motif element.

Its subcellular location is the endoplasmic reticulum membrane. It catalyses the reaction Catalyzes the rearrangement of -S-S- bonds in proteins.. In terms of biological role, probable disulfide isomerase, which participates in the folding of proteins containing disulfide bonds. May act as a dithiol oxidase. Acts as a regulator of endoplasmic reticulum-mitochondria contact sites via its ability to regulate redox signals. In Danio rerio (Zebrafish), this protein is Protein disulfide-isomerase tmx3a (tmx3a).